The following is a 236-amino-acid chain: Small ribosomal subunit protein uS2c (236 aa).

Belongs to the universal ribosomal protein uS2 family.

It localises to the plastid. The protein localises to the chloroplast. This chain is Small ribosomal subunit protein uS2c (rps2), found in Lemna minor (Common duckweed).